The chain runs to 490 residues: Betaine aldehyde dehydrogenase (490 aa).

Residues Thr-26 and Asp-93 each coordinate K(+). 150–152 serves as a coordination point for NAD(+); it reads GAW. The active-site Charge relay system is the Lys-162. NAD(+) is bound at residue 176 to 179; that stretch reads KPSE. Val-180 provides a ligand contact to K(+). 230–233 lines the NAD(+) pocket; the sequence is GVAT. K(+) is bound at residue Leu-246. Residue Glu-252 is the Proton acceptor of the active site. Gly-254, Cys-286, and Glu-387 together coordinate NAD(+). Cys-286 functions as the Nucleophile in the catalytic mechanism. Cys-286 bears the Cysteine sulfenic acid (-SOH) mark. Positions 457 and 460 each coordinate K(+). The active-site Charge relay system is the Glu-464.

It belongs to the aldehyde dehydrogenase family. As to quaternary structure, dimer of dimers. K(+) is required as a cofactor.

The catalysed reaction is betaine aldehyde + NAD(+) + H2O = glycine betaine + NADH + 2 H(+). It functions in the pathway amine and polyamine biosynthesis; betaine biosynthesis via choline pathway; betaine from betaine aldehyde: step 1/1. Its function is as follows. Involved in the biosynthesis of the osmoprotectant glycine betaine. Catalyzes the irreversible oxidation of betaine aldehyde to the corresponding acid. In Stenotrophomonas maltophilia (strain K279a), this protein is Betaine aldehyde dehydrogenase.